The primary structure comprises 460 residues: Argininosuccinate lyase (460 aa).

This sequence belongs to the lyase 1 family. Argininosuccinate lyase subfamily.

It is found in the cytoplasm. The enzyme catalyses 2-(N(omega)-L-arginino)succinate = fumarate + L-arginine. It participates in amino-acid biosynthesis; L-arginine biosynthesis; L-arginine from L-ornithine and carbamoyl phosphate: step 3/3. The protein is Argininosuccinate lyase of Streptococcus mutans serotype c (strain ATCC 700610 / UA159).